The primary structure comprises 63 residues: Phylloseptin-Az1 (63 aa).

Positions 1–19 (LKKSLFLVVFLGLATLSIC) are cleaved as a signal peptide. Residues 20–41 (EEEKRETEEEEYNQGEDDKSEE) constitute a propeptide that is removed on maturation. Phe-62 bears the Phenylalanine amide mark.

Expressed by the skin glands.

Its subcellular location is the secreted. Functionally, has antimicrobial activity. The protein is Phylloseptin-Az1 of Pithecopus azureus (Orange-legged monkey tree frog).